Consider the following 609-residue polypeptide: Frizzled and smoothened-like protein E (609 aa).

The signal sequence occupies residues 1–20 (MEMIRIFLIYLILKIIIING). At 21–259 (ENNEYSKGYG…QWKRVYDMAK (239 aa)) the chain is on the extracellular side. One can recognise an FZ domain in the interval 35–192 (FPGSKCLNYV…GLYKVPCIDP (158 aa)). Disulfide bonds link Cys40–Cys118, Cys53–Cys111, Cys100–Cys149, and Cys138–Cys189. N-linked (GlcNAc...) asparagine glycans are attached at residues Asn75, Asn130, Asn172, Asn198, Asn217, and Asn245. A helical membrane pass occupies residues 260–280 (TLSSISFICACYNILTFGILN). At 281–288 (RKRKSKYN) the chain is on the cytoplasmic side. The chain crosses the membrane as a helical span at residues 289 to 309 (ICITLMSTSIALVYLTDIIKF). The Extracellular portion of the chain corresponds to 310–337 (GYGIEEFLCPEPGRSAVQNDAACGITGA). Residues 338–358 (MFHFGITYCCCWAMTMSIVLF) form a helical membrane-spanning segment. The Cytoplasmic portion of the chain corresponds to 359 to 365 (CSVKRIK). The chain crosses the membrane as a helical span at residues 366 to 386 (LFYFRHFMIGNTIFTIITTVI). The Extracellular segment spans residues 387–408 (LLSAKKMVAGTGYIECWVRERW). Residues 409–429 (FVITLFWLPCGIGLSIGIFCI) form a helical membrane-spanning segment. Over 430–457 (GGVIHEIYNISKKVNIRESEFILRQIKP) the chain is Cytoplasmic. A helical transmembrane segment spans residues 458–478 (FSLVFSVAGSFLYLFIFFFDV). Residues 479–511 (ERKIDSYKAAVADYVLCLLSGGSEETCFTTGPN) lie on the Extracellular side of the membrane. A helical transmembrane segment spans residues 512–532 (YASFFIFYFFIRVFGVLFFSI). Residues 533–609 (YGTSRVARDI…DSKSIELEKK (77 aa)) are Cytoplasmic-facing. The span at 559-570 (ESGISRNNSRTD) shows a compositional bias: polar residues. The segment at 559–609 (ESGISRNNSRTDISFGKNNNSKNSNNSKNSNNSKNSNNSDNDSKSIELEKK) is disordered. Over residues 575-598 (KNNNSKNSNNSKNSNNSKNSNNSD) the composition is skewed to low complexity. A compositionally biased stretch (basic and acidic residues) spans 599-609 (NDSKSIELEKK).

It belongs to the G-protein coupled receptor Fz/Smo family.

The protein localises to the membrane. The polypeptide is Frizzled and smoothened-like protein E (fslE) (Dictyostelium discoideum (Social amoeba)).